We begin with the raw amino-acid sequence, 488 residues long: Histamine H1 receptor (488 aa).

Residues 1-38 (MSFLPGMTPVTLSNFSWALEDRMLEGNSTTTPTRQLMP) lie on the Extracellular side of the membrane. Residues asparagine 14 and asparagine 27 are each glycosylated (N-linked (GlcNAc...) asparagine). Residues 39–59 (LVVVLSSVSLVTVALNLLVLY) form a helical membrane-spanning segment. Residues 60-73 (AVRSERKLHTVGNL) lie on the Cytoplasmic side of the membrane. A helical membrane pass occupies residues 74-98 (YIVSLSVADLIVGAVVMPMSILYLH). Topologically, residues 99–106 (RSAWILGR) are extracellular. Residues 107–132 (PLCLFWLSMDYVASTASIFSVFILCI) traverse the membrane as a helical segment. An intrachain disulfide couples cysteine 109 to cysteine 189. Histamine-binding residues include aspartate 116 and threonine 121. The important for agonist binding stretch occupies residues 116–121 (DYVAST). Over 133–153 (DRYRSVQQPLRYLRYRTKTRA) the chain is Cytoplasmic. Phosphothreonine is present on residues threonine 149 and threonine 151. Residues 154 to 173 (SATILGAWLLSFLWVIPILG) traverse the membrane as a helical segment. At 174-197 (WHHFMAPTSEPREKKCETDFYDVT) the chain is on the extracellular side. A helical membrane pass occupies residues 198-220 (WFKVMTAIINFYLPTLLMLWFYI). Position 207 (asparagine 207) interacts with histamine. At 221-417 (RIYKAVRRHC…LNRERKAAKQ (197 aa)) the chain is on the cytoplasmic side. Position 239 is a phosphoserine (serine 239). Residues 259 to 274 (RMGKESPWEDPKRCSK) are compositionally biased toward basic and acidic residues. The interval 259–285 (RMGKESPWEDPKRCSKDASGVHTPMPS) is disordered. Phosphoserine is present on residues serine 345, serine 381, serine 383, serine 397, and serine 399. The helical transmembrane segment at 418-441 (LGCIMAAFILCWIPYFVFFMVIAF) threads the bilayer. The interval 425–429 (FILCW) is important for agonist binding. Residue tyrosine 432 coordinates histamine. Cysteine 442 and cysteine 445 are disulfide-bonded. Residues 442-447 (CKSCSN) lie on the Extracellular side of the membrane. Residues 448–470 (EPVHMFTIWLGYLNSTLNPLIYP) form a helical membrane-spanning segment. Over 471 to 488 (LCNENFRKTFKRILRIPP) the chain is Cytoplasmic.

It belongs to the G-protein coupled receptor 1 family. In terms of processing, phosphorylation at sites in the second and third cytoplasmic loops independently contribute to agonist-induced receptor down-regulation.

It is found in the cell membrane. Its function is as follows. G-protein-coupled receptor for histamine, a biogenic amine that functions as an immune modulator and a neurotransmitter. Through the H1 receptor, histamine mediates the contraction of smooth muscles and increases capillary permeability due to contraction of terminal venules. Also mediates neurotransmission in the central nervous system and thereby regulates circadian rhythms, emotional and locomotor activities as well as cognitive functions. The sequence is that of Histamine H1 receptor from Cavia porcellus (Guinea pig).